Consider the following 263-residue polypeptide: Orotidine 5'-phosphate decarboxylase (263 aa).

Substrate contacts are provided by residues Asp36, 58-60 (KTH), 90-99 (DRKFADIGNT), Tyr216, and Arg234. Lys92 serves as the catalytic Proton donor.

The protein belongs to the OMP decarboxylase family.

It catalyses the reaction orotidine 5'-phosphate + H(+) = UMP + CO2. The protein operates within pyrimidine metabolism; UMP biosynthesis via de novo pathway; UMP from orotate: step 2/2. This is Orotidine 5'-phosphate decarboxylase (URA3) from Komagataella pastoris (Yeast).